Here is an 81-residue protein sequence, read N- to C-terminus: Lantipeptide prochlorosin 1.1 (81 aa).

Residues 1–65 (MSEEQLKAFI…DDDLEGVAGG (65 aa)) constitute a propeptide that is removed on maturation. The beta-methyllanthionine (Cys-Thr) cross-link spans 68–72 (CVQGT). A cross-link (beta-methyllanthionine (Thr-Cys)) is located at residues 77–81 (TINVC).

Post-translationally, cross-links are proved in vitro, when coepressed in E.coli with the ProcM lanthionine synthetase. The beta-methyllanthionine residues have a DL configuration (with 2S,3S,6R stereochemistry). In terms of processing, maturation of prochlorosin involves the enzymatic conversion of Thr, and Ser into dehydrated AA and the formation of thioether bonds with cysteines. This is followed by membrane translocation and cleavage of the modified precursor.

It localises to the secreted. Functionally, lanthionine-containing peptide (lantipeptide) with unknown function. Does not show antibiotic activity against Lactococcus lactis 117 and Bacillus subtilis 6633 bacteria. Organisms that produce this peptide live in oligotrophic environments at very dilute concentrations, suggesting this peptide is not secreted to influence other bacteria. The protein is Lantipeptide prochlorosin 1.1 of Prochlorococcus marinus (strain MIT 9313).